The chain runs to 486 residues: Pup--protein ligase (486 aa).

Glutamate 33 contributes to the Mg(2+) binding site. Arginine 76 contributes to the ATP binding site. Tyrosine 78 serves as a coordination point for Mg(2+). Aspartate 80 acts as the Proton acceptor in catalysis. Glutamate 86 contacts Mg(2+). ATP is bound by residues threonine 89 and tryptophan 451.

Belongs to the Pup ligase/Pup deamidase family. Pup-conjugating enzyme subfamily.

It carries out the reaction ATP + [prokaryotic ubiquitin-like protein]-L-glutamate + [protein]-L-lysine = ADP + phosphate + N(6)-([prokaryotic ubiquitin-like protein]-gamma-L-glutamyl)-[protein]-L-lysine.. The protein operates within protein degradation; proteasomal Pup-dependent pathway. It functions in the pathway protein modification; protein pupylation. Catalyzes the covalent attachment of the prokaryotic ubiquitin-like protein modifier Pup to the proteasomal substrate proteins, thereby targeting them for proteasomal degradation. This tagging system is termed pupylation. The ligation reaction involves the side-chain carboxylate of the C-terminal glutamate of Pup and the side-chain amino group of a substrate lysine. The chain is Pup--protein ligase from Bifidobacterium longum (strain DJO10A).